The primary structure comprises 152 residues: Ribosome maturation factor RimP (152 aa).

The protein belongs to the RimP family.

It is found in the cytoplasm. Functionally, required for maturation of 30S ribosomal subunits. The chain is Ribosome maturation factor RimP from Clostridium beijerinckii (strain ATCC 51743 / NCIMB 8052) (Clostridium acetobutylicum).